The primary structure comprises 1043 residues: BAG family molecular chaperone regulator 6 (1043 aa).

5 disordered regions span residues 253-294 (KEEL…GKTV), 311-331 (DVKE…PYPI), 343-366 (VEAS…SDLH), 410-500 (NIPV…AESR), and 533-566 (SVES…KKSF). Composition is skewed to basic and acidic residues over residues 311-324 (DVKE…KEEP), 343-357 (VEAS…EGRN), 416-443 (SENH…KKEQ), and 478-487 (KRMEKSKETK). Over residues 534–543 (VESNSNLQEE) the composition is skewed to polar residues. A compositionally biased stretch (basic and acidic residues) spans 550-566 (KPCEAKENREQPAKKSF). Residues 568–597 (EEEAARIIQSMYRGYDVRRWEPIKKLKEIA) form the IQ domain. The BAG domain maps to 595 to 672 (EIATVREQMG…SIQDKLDSLK (78 aa)). A compositionally biased stretch (basic and acidic residues) spans 724–741 (SPEEHPMSVLNRTDEKQA). Disordered regions lie at residues 724–749 (SPEE…ETEE), 764–799 (ATEN…GNGM), 817–975 (EPIN…ISKE), and 1015–1043 (EKKL…DAVL). The segment covering 840–852 (ASEVSEAETNSSE) has biased composition (low complexity). Basic and acidic residues predominate over residues 853-871 (NENRKGEDDIVLHSEKNVE). Composition is skewed to polar residues over residues 885 to 899 (QPLS…TREG) and 919 to 932 (SPNN…QTSE). Over residues 934-951 (QDEKEQSPETEVIVKEQP) the composition is skewed to basic and acidic residues. The stretch at 971 to 1024 (GISKETKKLMEENQRFKETMETLVKAGREQLEVISKLTSRVKSLEKKLSHKKKT) forms a coiled coil. Residues 1018-1031 (LSHKKKTQIRRRAS) are compositionally biased toward basic residues. Over residues 1034-1043 (MSVSPTDAVL) the composition is skewed to polar residues.

As to quaternary structure, binds to the ATPase domain of HSP70/HSC70 chaperones. Interacts with calmodulins CAM1, CAM2, CAM3, CAM4, CAM6 and CAM7. Interacts with BAGP1 and APCB1. Detected in stems, leaves, flowers and roots.

Functionally, co-chaperone that regulates diverse cellular pathways, such as programmed cell death and stress responses. Involved in plant basal resistance. Involved in basal heat response through the regulation of the heat induced small HSP (sHSP) transcriptional cascade. Its function is as follows. Induces autophagy. The sequence is that of BAG family molecular chaperone regulator 6 from Arabidopsis thaliana (Mouse-ear cress).